Reading from the N-terminus, the 660-residue chain is Pescadillo homolog (660 aa).

2 disordered regions span residues 313–358 (VESD…SYSS) and 471–660 (PELY…EKKA). A compositionally biased stretch (basic and acidic residues) spans 331–342 (EEKPSDAIDKFE). The BRCT domain occupies 360–476 (DPAQLFSRLT…ELKSPELYGP (117 aa)). Residues 501-659 (LEEQQSEGEA…KRRRLEKEKK (159 aa)) are a coiled coil. The span at 504–566 (QQSEGEAIDA…EEGSEDEEES (63 aa)) shows a compositional bias: acidic residues. Basic and acidic residues predominate over residues 584 to 619 (VKGDKKMDAKTKAKLEAKKALERKKKSEAEDLERAK).

This sequence belongs to the pescadillo family. Component of the NOP7 complex, composed of ERB1, NOP7 and YTM1. The complex is held together by ERB1, which interacts with NOP7 via its N-terminal domain and with YTM1 via a high-affinity interaction between the seven-bladed beta-propeller domains of the 2 proteins. The NOP7 complex associates with the 66S pre-ribosome.

The protein localises to the nucleus. It localises to the nucleolus. The protein resides in the nucleoplasm. Component of the NOP7 complex, which is required for maturation of the 25S and 5.8S ribosomal RNAs and formation of the 60S ribosome. This Chaetomium globosum (strain ATCC 6205 / CBS 148.51 / DSM 1962 / NBRC 6347 / NRRL 1970) (Soil fungus) protein is Pescadillo homolog.